The sequence spans 147 residues: Hemoglobin subunit epsilon (147 aa).

Residues histidine 3–histidine 147 form the Globin domain. Phosphoserine is present on residues serine 14 and serine 51. 2 residues coordinate heme b: histidine 64 and histidine 93.

Belongs to the globin family. As to quaternary structure, heterotetramer of two alpha chains and two epsilon chains in early embryonic hemoglobin Gower-2; two zeta chains and two epsilon chains in early embryonic hemoglobin Gower-1. As to expression, red blood cells.

Functionally, the epsilon chain is a beta-type chain of early mammalian embryonic hemoglobin. This is Hemoglobin subunit epsilon (HBE1) from Pithecia irrorata (Gray monk saki).